A 676-amino-acid polypeptide reads, in one-letter code: PAS domain-containing protein cky-1 (676 aa).

The span at 45–72 (SALNNNSINVPNNNTMGMSSAGSSNGSN) shows a compositional bias: low complexity. The interval 45–89 (SALNNNSINVPNNNTMGMSSAGSSNGSNLVNGQQRSTRGASKQRR) is disordered. Over residues 73 to 84 (LVNGQQRSTRGA) the composition is skewed to polar residues. Positions 76-89 (GQQRSTRGASKQRR) are basic motif. One can recognise a bHLH domain in the interval 76 to 129 (GQQRSTRGASKQRRDQINVEIQKLRDLLPLSDLIKDRLFQLQVMSLGCIFIRKH). Residues 90–129 (DQINVEIQKLRDLLPLSDLIKDRLFQLQVMSLGCIFIRKH) are helix-loop-helix motif. In terms of domain architecture, PAS spans 165 to 215 (MLMVTRSGKILHVSDNASEYLGHSVEEIMCQGDSIYDLVDGRDHGAVQAEL). The interval 436 to 462 (FSCQDSPPPSEEQQPSSPQTPPFTEQP) is disordered.

As to quaternary structure, heterodimer; efficient DNA binding requires dimerization with another bHLH protein. Forms a heterodimer with ARNT homolog aha-1; binds DNA as heterodimer.

The protein resides in the nucleus. In terms of biological role, transcription factor. Efficient DNA binding requires dimerization with another bHLH protein, such as ARNT homolog aha-1. Regulates transcription of target genes, probably acting in complex with aha-1. This chain is PAS domain-containing protein cky-1, found in Caenorhabditis elegans.